The sequence spans 268 residues: Nitrite transporter NirC (268 aa).

Residues 1–25 are Cytoplasmic-facing; the sequence is MFTDTINKCAANAARIARLSANNPL. A helical membrane pass occupies residues 26–46; it reads GFWVSSAMAGAYVGLGIILIF. The Periplasmic segment spans residues 47–59; that stretch reads TLGNLLDPSVRPL. The helical transmembrane segment at 60 to 80 threads the bilayer; sequence VMGATFGIALTLVIIAGSELF. Residues 81-112 are Cytoplasmic-facing; it reads TGHTMFLTFGVKAGSISHGQMWAILPQTWLGN. Residues 113–133 form a helical membrane-spanning segment; it reads LVGSVFVAMLYSWGGGSLLPV. Residues 134–151 are Periplasmic-facing; it reads DTSIVHSVALAKTTAPAM. The helical transmembrane segment at 152-172 threads the bilayer; the sequence is VLFFKGALCNWLVCLAIWMAL. The Cytoplasmic portion of the chain corresponds to 173–179; that stretch reads RTEGAAK. Residues 180 to 200 traverse the membrane as a helical segment; that stretch reads FIAIWWCLLAFIASGYEHSIA. Over 201–225 the chain is Periplasmic; the sequence is NMTLFALSWFGNHSEAYTLAGIGHN. A helical transmembrane segment spans residues 226–246; that stretch reads LLWVTLGNTLSGAVFMGLGYW. The Cytoplasmic segment spans residues 247–268; sequence YATPKANRPVADKFNQTETAAG.

It belongs to the FNT transporter (TC 1.A.16) family.

Its subcellular location is the cell inner membrane. In terms of biological role, catalyzes nitrite uptake and nitrite export across the cytoplasmic membrane. Is up to 10-fold more active than NarK or NarU in nitrite uptake for subsequent reduction in the cytoplasm by the NirB/NirD nitrite reductase. This Escherichia coli (strain K12) protein is Nitrite transporter NirC (nirC).